Reading from the N-terminus, the 56-residue chain is Ferredoxin (56 aa).

4Fe-4S ferredoxin-type domains are found at residues 2 to 29 (AYVI…AGDD) and 29 to 56 (DKYV…PQPE). The [4Fe-4S] cluster site is built by Cys-9, Cys-12, Cys-15, Cys-19, Cys-38, Cys-41, Cys-44, and Cys-48.

[4Fe-4S] cluster is required as a cofactor.

Functionally, ferredoxins are iron-sulfur proteins that transfer electrons in a wide variety of metabolic reactions. The protein is Ferredoxin of Acetoanaerobium sticklandii (strain ATCC 12662 / DSM 519 / JCM 1433 / CCUG 9281 / NCIMB 10654 / HF) (Clostridium sticklandii).